Here is a 485-residue protein sequence, read N- to C-terminus: 2-succinylbenzoate--CoA ligase (485 aa).

This sequence belongs to the ATP-dependent AMP-binding enzyme family. MenE subfamily.

The enzyme catalyses 2-succinylbenzoate + ATP + CoA = 2-succinylbenzoyl-CoA + AMP + diphosphate. It functions in the pathway quinol/quinone metabolism; 1,4-dihydroxy-2-naphthoate biosynthesis; 1,4-dihydroxy-2-naphthoate from chorismate: step 5/7. The protein operates within quinol/quinone metabolism; menaquinone biosynthesis. Converts 2-succinylbenzoate (OSB) to 2-succinylbenzoyl-CoA (OSB-CoA). The protein is 2-succinylbenzoate--CoA ligase of Enterococcus faecalis (strain ATCC 700802 / V583).